Reading from the N-terminus, the 705-residue chain is Dolichyl-diphosphooligosaccharide--protein glycosyltransferase subunit STT3A (705 aa).

Residues 1-17 (MTKLGFLRLSYEKQDTL) are Cytoplasmic-facing. A helical membrane pass occupies residues 18–38 (LKLLILSMAAVLSFSTRLFAV). The Lumenal segment spans residues 39 to 119 (LRFESVIHEF…IDIRNVCVFL (81 aa)). A DXD motif 1 motif is present at residues 47-49 (EFD). Residue Asp49 coordinates Mn(2+). A helical membrane pass occupies residues 120 to 138 (APLFSSFTTIVTYHLTKEL). The Cytoplasmic segment spans residues 139–140 (KD). A helical membrane pass occupies residues 141 to 158 (AGAGLLAAAMIAVVPGYI). Residues 159–169 (SRSVAGSYDNE) are Lumenal-facing. Positions 167 and 169 each coordinate Mn(2+). The DXD motif 2 signature appears at 167-169 (DNE). The chain crosses the membrane as a helical span at residues 170-189 (GIAIFCMLLTYYMWIKAVKT). Residues 190–191 (GS) are Cytoplasmic-facing. The helical transmembrane segment at 192–206 (IYWAAKCALAYFYMV) threads the bilayer. Residues 207–211 (SSWGG) lie on the Lumenal side of the membrane. The helical transmembrane segment at 212–228 (YVFLINLIPLHVLVLML) threads the bilayer. Over 229 to 233 (TGRFS) the chain is Cytoplasmic. Residues 234-259 (HRIYVAYCTVYCLGTILSMQISFVGF) form a helical membrane-spanning segment. Over 260 to 267 (QPVLSSEH) the chain is Lumenal. The chain crosses the membrane as a helical span at residues 268-287 (MAAFGVFGLCQIHAFVDYLR). Over 288 to 300 (SKLNPQQFEVLFR) the chain is Cytoplasmic. Residues 301–321 (SVISLVGFVLLTVGALLMLTG) form a helical membrane-spanning segment. The Lumenal portion of the chain corresponds to 322–356 (KISPWTGRFYSLLDPSYAKNNIPIIASVSEHQPTT). The SVSE motif signature appears at 348-351 (SVSE). The helical transmembrane segment at 357-379 (WSSYYFDLQLLVFMFPVGLYYCF) threads the bilayer. Residues 380-385 (SNLSDA) lie on the Cytoplasmic side of the membrane. Residues 386 to 402 (RIFIIMYGVTSMYFSAV) form a helical membrane-spanning segment. Residues 403–406 (MVRL) are Lumenal-facing. Dolichyl diphosphooligosaccharide is bound at residue Arg405. The chain crosses the membrane as a helical span at residues 407–428 (MLVLAPVMCILSGIGVSQVLST). The Cytoplasmic segment spans residues 429–453 (YMKNLDISRPDKKSKKQQDSTYPIK). Residues 454 to 473 (NEVASGMILVMAFFLITYTF) traverse the membrane as a helical segment. Residues 474 to 705 (HSTWVTSEAY…DLDNRGLSRT (232 aa)) are Lumenal-facing. The interacts with target acceptor peptide in protein substrate stretch occupies residues 525-527 (WWD). A WWDYG motif motif is present at residues 525–529 (WWDYG). Tyr530 lines the dolichyl diphosphooligosaccharide pocket. 2 N-linked (GlcNAc...) asparagine glycosylation sites follow: Asn537 and Asn544. Asn548 is a glycosylation site (N-linked (GlcNAc...) (high mannose) asparagine). The short motif at 592–599 (DINKFLWM) is the DK motif element.

This sequence belongs to the STT3 family. Component of the oligosaccharyltransferase (OST) complex. There are 2 OST complexes, OST-A and OST-B, which contain STT3A or STT3B as catalytic subunit, respectively. OST-A and OST-B contain common core subunits RPN1, RPN2, OST48, OST4, DAD1 and TMEM258, and OST-A contains DC2/OSTC and KRTCAP2/KCP2 specific accessory subunits. OST-A complex assembly occurs through the formation of 3 subcomplexes. Subcomplex 1 contains RPN1 and TMEM258, subcomplex 2 contains the OST-A-specific subunits STT3A, DC2/OSTC, and KCP2 as well as the core subunit OST4, and subcomplex 3 contains RPN2, DAD1, and OST48. The OST-A complex can form stable complexes with the Sec61 complex or with both the Sec61 and TRAP complexes. Mg(2+) is required as a cofactor. It depends on Mn(2+) as a cofactor.

The protein localises to the endoplasmic reticulum. It is found in the endoplasmic reticulum membrane. The catalysed reaction is a di-trans,poly-cis-dolichyl diphosphooligosaccharide + L-asparaginyl-[protein] = N(4)-(oligosaccharide-(1-&gt;4)-N-acetyl-beta-D-glucosaminyl-(1-&gt;4)-N-acetyl-beta-D-glucosaminyl)-L-asparaginyl-[protein] + a di-trans,poly-cis-dolichyl diphosphate + H(+). It participates in protein modification; protein glycosylation. Its function is as follows. Catalytic subunit of the oligosaccharyl transferase (OST) complex that catalyzes the initial transfer of a defined glycan (Glc(3)Man(9)GlcNAc(2) in eukaryotes) from the lipid carrier dolichol-pyrophosphate to an asparagine residue within an Asn-X-Ser/Thr consensus motif in nascent polypeptide chains, the first step in protein N-glycosylation. N-glycosylation occurs cotranslationally and the complex associates with the Sec61 complex at the channel-forming translocon complex that mediates protein translocation across the endoplasmic reticulum (ER). All subunits are required for a maximal enzyme activity. This subunit contains the active site and the acceptor peptide and donor lipid-linked oligosaccharide (LLO) binding pockets. STT3A is present in the majority of OST complexes and mediates cotranslational N-glycosylation of most sites on target proteins, while STT3B-containing complexes are required for efficient post-translational glycosylation and mediate glycosylation of sites that have been skipped by STT3A. STT3A-containing OST-A complex is also required to prevent hyperglycosylation of some target proteins by preventing glycosylation of facultative sites before folding of target proteins is completed. This chain is Dolichyl-diphosphooligosaccharide--protein glycosyltransferase subunit STT3A, found in Mus musculus (Mouse).